A 551-amino-acid chain; its full sequence is uncharacterized protein (551 aa).

A run of 6 helical transmembrane segments spans residues 1–21 (MIAY…IVNS), 25–45 (WTYF…LMVS), 99–119 (GALF…FGFN), 124–144 (LGVL…SLMW), 266–286 (FAFL…GVFY), and 490–510 (FLDL…SAED).

Its subcellular location is the cell membrane. This is an uncharacterized protein from Haemophilus influenzae (strain ATCC 51907 / DSM 11121 / KW20 / Rd).